Reading from the N-terminus, the 220-residue chain is Ribose-5-phosphate isomerase A (220 aa).

Residues 28-31 (TGST), 81-84 (DGAD), and 94-97 (KGGG) each bind substrate. Glutamate 103 acts as the Proton acceptor in catalysis. Lysine 121 is a binding site for substrate.

It belongs to the ribose 5-phosphate isomerase family. As to quaternary structure, homodimer.

The catalysed reaction is aldehydo-D-ribose 5-phosphate = D-ribulose 5-phosphate. The protein operates within carbohydrate degradation; pentose phosphate pathway; D-ribose 5-phosphate from D-ribulose 5-phosphate (non-oxidative stage): step 1/1. Its function is as follows. Catalyzes the reversible conversion of ribose-5-phosphate to ribulose 5-phosphate. The sequence is that of Ribose-5-phosphate isomerase A from Shewanella sp. (strain W3-18-1).